We begin with the raw amino-acid sequence, 528 residues long: MNLTELEEIGLKNVGKVYHNLGYDELIKHEIENKECILTTSGATAVDTGVFTGRSPKDKYIVDRDPSNRYIAWGDVNQKVSEEIFKELLEVAREQLSAKDLYVTDVYSGASVDSKHSIRFVTEIAWQAHFVKNMFIRPTELELKEFKPQFTVLNACKAVNDKWREHGLNSEVFVLFDIENNLSVIGGTWYGGELKKGIFSMMNYWLPLQNKLSMHCSANVGEKGDTALFFGLSGTGKTTLSTDPYRRLIGDDEHGWDDNGVFNFEGGCYAKVINLDGNNEPEIFNAIKSGALLENVVVNDKGEVDYNDGSKTENTRVSYPIEHIKNHETSLSAGHPENIIFLSADAFGILPPVSKLTREQAMYYFLSGYTAKVAGTERGITKPVATFSSCFGEAFLPLHPTVYAKLLGEKIDKHDVHVYLVNTGWTGGAYGVGTRMSIKDTRACINAILDGSIKESEFDTTKTFKLQVPKTLGNINPEILNPRNAWSDKEAFDKTTDMLANMFNENFKKYQVENSEFDYSEAGPKIES.

Substrate is bound by residues Arg-54, Tyr-190, and Lys-196. ATP-binding positions include Lys-196, His-215, and 231 to 239 (GLSGTGKTT). Mn(2+) is bound by residues Lys-196 and His-215. Position 252 (Asp-252) interacts with Mn(2+). The ATP site is built by Glu-280, Arg-316, and Thr-441. Substrate is bound at residue Arg-316.

The protein belongs to the phosphoenolpyruvate carboxykinase (ATP) family. Requires Mn(2+) as cofactor.

The protein resides in the cytoplasm. It carries out the reaction oxaloacetate + ATP = phosphoenolpyruvate + ADP + CO2. The protein operates within carbohydrate biosynthesis; gluconeogenesis. Functionally, involved in the gluconeogenesis. Catalyzes the conversion of oxaloacetate (OAA) to phosphoenolpyruvate (PEP) through direct phosphoryl transfer between the nucleoside triphosphate and OAA. This chain is Phosphoenolpyruvate carboxykinase (ATP), found in Sulfurimonas denitrificans (strain ATCC 33889 / DSM 1251) (Thiomicrospira denitrificans (strain ATCC 33889 / DSM 1251)).